The chain runs to 554 residues: (E)-nerolidol synthase TPS18VF (554 aa).

The (2E,6E)-farnesyl diphosphate site is built by arginine 276, aspartate 313, aspartate 317, arginine 455, and aspartate 458. Mg(2+)-binding residues include aspartate 313 and aspartate 317. The DDXXD motif motif lies at 313–317; sequence DDIFD. Mg(2+) is bound by residues aspartate 458, serine 462, and glutamate 466.

Belongs to the terpene synthase family. Tpsb subfamily. Requires Mg(2+) as cofactor. The cofactor is Mn(2+). In terms of tissue distribution, highly expressed in glandular trichomes.

It carries out the reaction (2E,6E)-farnesyl diphosphate + H2O = (6E)-nerolidol + diphosphate. The enzyme catalyses (2E)-geranyl diphosphate + H2O = (R)-linalool + diphosphate. It catalyses the reaction (2E)-geranyl diphosphate + H2O = (S)-linalool + diphosphate. It participates in secondary metabolite biosynthesis; terpenoid biosynthesis. Its function is as follows. Involved in sesquiterpene olefins biosynthesis, constituants of cannabinoids and terpenoids-rich resins. Catalyzes primarily the conversion of (2E)-farnesyl diphosphate to (E)-nerolidol, and the conversion of (2E)-geranyl diphosphate to (+)linalool and (-)linalool. The sequence is that of (E)-nerolidol synthase TPS18VF from Cannabis sativa (Hemp).